A 461-amino-acid polypeptide reads, in one-letter code: DNA polymerase delta subunit 3 (461 aa).

Disordered regions lie at residues 148-229, 249-380, and 399-461; these read VAQA…SAKG, VPGQ…KRVL, and YESE…CQKK. A compositionally biased stretch (polar residues) spans 155–172; that stretch reads ARSSSQTPSDTSAVSTPP. Basic and acidic residues predominate over residues 205 to 214; the sequence is DANKEPKAKE. The span at 215–228 shows a compositional bias: low complexity; it reads APSVSAASSKPSAK. The segment covering 279-304 has biased composition (basic and acidic residues); the sequence is KPGRKTEPAKIQQKDKKSKMKRMDKS. Residues 371 to 380 show a composition bias toward basic residues; that stretch reads GKKRKRKRVL. Positions 427-436 are enriched in basic and acidic residues; the sequence is VKKEPKEERK. The PIP-box motif lies at 451-458; that stretch reads QISIMGFC.

As to quaternary structure, component of both the DNA polymerase delta and DNA polymerase zeta complexes. The tetrameric DNA polymerase delta complex (Pol-delta4), which consists of POLD1/p125, POLD2/p50, POLD3/p66/p68 and POLD4/p12, with POLD1 bearing DNA polymerase and 3' to 5' proofreading exonuclease activities.

It is found in the cytoplasm. The protein localises to the nucleus. Its function is as follows. Accessory component of both the DNA polymerase delta complex and the DNA polymerase zeta complex. As a component of the trimeric and tetrameric DNA polymerase delta complexes (Pol-delta3 and Pol-delta4, respectively), plays a role in high fidelity genome replication, including in lagging strand synthesis, and repair. Required for optimal Pol-delta activity. Stabilizes the Pol-delta complex and plays a major role in Pol-delta stimulation by PCNA. Pol-delta3 and Pol-delta4 are characterized by the absence or the presence of POLD4. They exhibit differences in catalytic activity. Most notably, Pol-delta3 shows higher proofreading activity than Pol-delta4. Although both Pol-delta3 and Pol-delta4 process Okazaki fragments in vitro, Pol-delta3 may also be better suited to fulfill this task, exhibiting near-absence of strand displacement activity compared to Pol-delta4 and stalling on encounter with the 5'-blocking oligonucleotides. Pol-delta3 idling process may avoid the formation of a gap, while maintaining a nick that can be readily ligated. Along with DNA polymerase kappa, DNA polymerase delta carries out approximately half of nucleotide excision repair (NER) synthesis following UV irradiation. In this context, POLD3, along with PCNA and RFC1-replication factor C complex, is required to recruit POLD1, the catalytic subunit of the polymerase delta complex, to DNA damage sites. Under conditions of DNA replication stress, required for the repair of broken replication forks through break-induced replication (BIR). Involved in the translesion synthesis (TLS) of templates carrying O6-methylguanine or abasic sites performed by Pol-delta4, independently of DNA polymerase zeta (REV3L) or eta (POLH). Facilitates abasic site bypass by DNA polymerase delta by promoting extension from the nucleotide inserted opposite the lesion. Also involved in TLS, as a component of the tetrameric DNA polymerase zeta complex. Along with POLD2, dramatically increases the efficiency and processivity of DNA synthesis of the DNA polymerase zeta complex compared to the minimal zeta complex, consisting of only REV3L and REV7. The sequence is that of DNA polymerase delta subunit 3 (POLD3) from Gallus gallus (Chicken).